Reading from the N-terminus, the 947-residue chain is Receptor-like protein 56 (947 aa).

Positions 1-27 (MEGKVFSGQKLILVMLLLGHLHGFSSC) are cleaved as a signal peptide. Over 28 to 899 (IEKERKALLE…EDDKEVAIDM (872 aa)) the chain is Extracellular. 3 N-linked (GlcNAc...) asparagine glycosylation sites follow: N60, N75, and N98. LRR repeat units follow at residues 105–128 (FEEVRSLDLSNSRLNGLVDDVEGY), 134–157 (LRNLQILNFSSNEFNNSIFPFLNA), 159–182 (TSLTTLSLRRNNMYGPIPLKELKN), 183–207 (LTNLELLDLSGNRIDGSMPVREFPY), 209–232 (KKLKALDLSSNGIYSSMEWQGLKN), 233–257 (LTNLEVLSLGYNYFDGPIPIEVFCE), 259–281 (KNLQELDLRGINFVGQLPLCFGN), 282–305 (LNKLRFLDLSSNQLTGNIPPSFSS), and 307–330 (ESLEYLSLSDNSFEGFFSLNPLTN). 3 N-linked (GlcNAc...) asparagine glycosylation sites follow: N141, N148, and N182. N-linked (GlcNAc...) asparagine glycosylation occurs at N232. The N-linked (GlcNAc...) asparagine glycan is linked to N330. The LRR 10; degenerate repeat unit spans residues 332–356 (TKLKVFIFSSKDDMVQVKIESTWQP). 18 LRR repeats span residues 357-380 (LFQLSVLVLRLCSLEKIPNFLMYQ), 381-404 (KNLHVVDLSGNRISGIIPTWLLEN), 405-427 (NPELEVLQLKNNSFTIFQMPTSV), 428-450 (HNLQVLDFSENNIGGLFPDNFGR), 452-476 (LPNLVHMNGSNNGFQGNFPSSMGEM), 477-500 (YNISFLDLSYNNLSGELPQSFVSS), 502-527 (FSLSILQLSHNKFSGHFLPRQTNFTS), 529-549 (IVLRINNNLFTGKIGVGLLTL), 550-575 (VDLCILDMSNNFLEGELPPLLLVFEY), 577-598 (NFLDLSGNLLSGALPSHVSLDN), 600-616 (LFLHNNNFTGPIPDTFL), 617-640 (GSIQILDLRNNKLSGNIPQFVDTQ), 642-663 (ISFLLLRGNSLTGYIPSTLCEF), 664-686 (SKMRLLDLSDNKLNGFIPSCFNN), 757-780 (LNSMYGLDLSSNELSGVIPAELGD), 781-804 (LFKLRALNLSHNFLSSHIPDSFSK), 805-829 (LQDIESLDLSYNMLQGSIPHQLTNL), and 831-854 (SLAIFNVSYNNLSGIIPQGKQFNT). A glycan (N-linked (GlcNAc...) asparagine) is linked at N415. Residues N459, N478, N488, and N524 are each glycosylated (N-linked (GlcNAc...) asparagine). N-linked (GlcNAc...) asparagine glycosylation is present at N606. N686 carries N-linked (GlcNAc...) asparagine glycosylation. N788, N828, N836, and N841 each carry an N-linked (GlcNAc...) asparagine glycan. Residues 900–920 (LVFYWSTAGTYVTALIGILVL) traverse the membrane as a helical segment. Residues 921–947 (MCVDCSWRRAWLRLVDAFIASAKSKLA) are Cytoplasmic-facing.

Belongs to the RLP family.

It is found in the cell membrane. This is Receptor-like protein 56 from Arabidopsis thaliana (Mouse-ear cress).